Consider the following 436-residue polypeptide: Magnesium transporter MRS2-B (436 aa).

Low complexity-rich tracts occupy residues 1 to 14 (MSAA…GDSA) and 29 to 54 (VASV…FPGG). A disordered region spans residues 1 to 60 (MSAAAASSAAGDSAKQPLLHHQRGNPPHVASVSSPSLPSAPPGALAGGRRFPGGLDVPNL). Positions 176-242 (LALEAACSFL…RDEIEQLMDD (67 aa)) form a coiled coil. 2 helical membrane passes run 372–392 (LLLT…GIFG) and 408–428 (WVLI…LWFF). The Required for magnesium transport activity motif lies at 392 to 394 (GMN).

The protein belongs to the CorA metal ion transporter (MIT) (TC 1.A.35.5) family.

Its subcellular location is the membrane. In terms of biological role, magnesium transporter that may mediate the influx of magnesium. This chain is Magnesium transporter MRS2-B (MRS2-B), found in Oryza sativa subsp. indica (Rice).